The primary structure comprises 552 residues: uncharacterized protein (552 aa).

This is an uncharacterized protein from Methanocaldococcus jannaschii (strain ATCC 43067 / DSM 2661 / JAL-1 / JCM 10045 / NBRC 100440) (Methanococcus jannaschii).